Consider the following 76-residue polypeptide: Exodeoxyribonuclease 7 small subunit (76 aa).

Belongs to the XseB family. As to quaternary structure, heterooligomer composed of large and small subunits.

It localises to the cytoplasm. It catalyses the reaction Exonucleolytic cleavage in either 5'- to 3'- or 3'- to 5'-direction to yield nucleoside 5'-phosphates.. Its function is as follows. Bidirectionally degrades single-stranded DNA into large acid-insoluble oligonucleotides, which are then degraded further into small acid-soluble oligonucleotides. The polypeptide is Exodeoxyribonuclease 7 small subunit (Arthrobacter sp. (strain FB24)).